The chain runs to 618 residues: UvrABC system protein C (618 aa).

A GIY-YIG domain is found at 13-92 (DKPGVYLMKN…IKKYRPKYNI (80 aa)). One can recognise a UVR domain in the interval 204 to 239 (LDIVENFKLNMEKAAENLEFEKAAMLRDKINIIEKI).

This sequence belongs to the UvrC family. As to quaternary structure, interacts with UvrB in an incision complex.

The protein localises to the cytoplasm. Its function is as follows. The UvrABC repair system catalyzes the recognition and processing of DNA lesions. UvrC both incises the 5' and 3' sides of the lesion. The N-terminal half is responsible for the 3' incision and the C-terminal half is responsible for the 5' incision. This is UvrABC system protein C from Clostridium botulinum (strain Kyoto / Type A2).